Consider the following 573-residue polypeptide: FAD-dependent monooxygenase resA (573 aa).

The signal sequence occupies residues methionine 1–alanine 17. Isoleucine 106 is an FAD binding site. Residue asparagine 235 is glycosylated (N-linked (GlcNAc...) asparagine).

The protein belongs to the FAD-binding monooxygenase family. FAD serves as cofactor.

It participates in antifungal biosynthesis. In terms of biological role, FAD-dependent monooxygenase; part of the gene cluster that mediates the biosynthesis of the tetrahydropyranyl antifungal agent restricticin that acts as an inhibitor of CYP51 and blocks the ergosterol biosynthesis. The highly reducing polyketide synthase resH, the short chain dehydrogenase resG, the cyclase resF, the FAD-dependent monooxygenase resA and the enoylreductase resD are required to generate the first stable intermediate desmethylrestrictinol. ResH with resD biosynthesize the first polyketide chain intermediate that is reduced by resG, followed by epoxidation by resA before 6-endo cyclization via epoxide opening by resF leads to desmethylrestrictinol. The methyltransferase resE then catalyzes the C4 O-methylation of desmethylrestrictinol to produce restrictinol, and the nonribosomal peptide synthetase resC catalyzes the C3 esterification of restrictinol with glycine that leads to restricticin. In Aspergillus sclerotiorum, this protein is FAD-dependent monooxygenase resA.